Consider the following 231-residue polypeptide: Glutathione-S-transferase (231 aa).

The region spanning 15–98 (LFAVKGTATS…YIADAYDKDG (84 aa)) is the GST N-terminal domain.

The protein belongs to the GST superfamily.

The enzyme catalyses RX + glutathione = an S-substituted glutathione + a halide anion + H(+). Its function is as follows. Conjugation of reduced glutathione to a wide number of exogenous and endogenous hydrophobic electrophiles. The chain is Glutathione-S-transferase from Alternaria alternata (Alternaria rot fungus).